A 363-amino-acid chain; its full sequence is 3-dehydroquinate synthase (363 aa).

NAD(+)-binding positions include 74 to 79 (DGEQYK), 108 to 112 (GVIGD), 132 to 133 (TT), Lys-145, Lys-154, and 172 to 175 (CLKT). Zn(2+) is bound by residues Glu-187, His-250, and His-267.

Belongs to the sugar phosphate cyclases superfamily. Dehydroquinate synthase family. It depends on NAD(+) as a cofactor. Requires Co(2+) as cofactor. Zn(2+) is required as a cofactor.

The protein resides in the cytoplasm. It carries out the reaction 7-phospho-2-dehydro-3-deoxy-D-arabino-heptonate = 3-dehydroquinate + phosphate. The protein operates within metabolic intermediate biosynthesis; chorismate biosynthesis; chorismate from D-erythrose 4-phosphate and phosphoenolpyruvate: step 2/7. Functionally, catalyzes the conversion of 3-deoxy-D-arabino-heptulosonate 7-phosphate (DAHP) to dehydroquinate (DHQ). The sequence is that of 3-dehydroquinate synthase from Buchnera aphidicola subsp. Acyrthosiphon pisum (strain APS) (Acyrthosiphon pisum symbiotic bacterium).